A 254-amino-acid polypeptide reads, in one-letter code: MVIANSNIIFVAGLGGIGLDTSREIVKSGPKNLVVLDRVDNPAAIAELKALNPKVTVTFYPYDVTVPVAETKKLLKTIFDKLKTVDLLINGAGILDDNQIERTIAVNFTGTVNTTTAIMDFWDKRKGGPGGVIANICSVTGFNSIYQVPVYSASKAAALSFTTSLAKLAHITGVTAYSINPGITKTVLVHKFNSWLSVEPRVAELLLEHPTQTTLQCAQNFVKAIEANQNGAIWKLDLGRLDAIEWTKHWDSGI.

Residue 10-33 participates in NAD(+) binding; it reads FVAGLGGIGLDTSREIVKSGPKNL. Residue S138 coordinates substrate. Y151 acts as the Proton acceptor in catalysis.

This sequence belongs to the short-chain dehydrogenases/reductases (SDR) family. Homodimer.

The catalysed reaction is a primary alcohol + NAD(+) = an aldehyde + NADH + H(+). The enzyme catalyses a secondary alcohol + NAD(+) = a ketone + NADH + H(+). The protein is Alcohol dehydrogenase (Adh) of Drosophila planitibia (Fruit fly).